We begin with the raw amino-acid sequence, 891 residues long: Translation initiation factor IF-2 (891 aa).

Residues 50 to 303 (KKEHGSADES…TSMQHGFDKS (254 aa)) form a disordered region. Composition is skewed to basic and acidic residues over residues 102–237 (TLEE…KTAD) and 245–261 (HARE…EQQP). The tr-type G domain maps to 390-559 (GRAPVVTIMG…LLQSEVLELT (170 aa)). The tract at residues 399–406 (GHVDHGKT) is G1. Residue 399-406 (GHVDHGKT) coordinates GTP. Residues 424–428 (GITQH) form a G2 region. The tract at residues 445 to 448 (DTPG) is G3. GTP contacts are provided by residues 445 to 449 (DTPGH) and 499 to 502 (NKID). Positions 499 to 502 (NKID) are G4. Residues 535–537 (SAK) form a G5 region.

This sequence belongs to the TRAFAC class translation factor GTPase superfamily. Classic translation factor GTPase family. IF-2 subfamily.

The protein resides in the cytoplasm. Functionally, one of the essential components for the initiation of protein synthesis. Protects formylmethionyl-tRNA from spontaneous hydrolysis and promotes its binding to the 30S ribosomal subunits. Also involved in the hydrolysis of GTP during the formation of the 70S ribosomal complex. The polypeptide is Translation initiation factor IF-2 (Aliivibrio salmonicida (strain LFI1238) (Vibrio salmonicida (strain LFI1238))).